The primary structure comprises 368 residues: Transaldolase (368 aa).

Lys-140 acts as the Schiff-base intermediate with substrate in catalysis.

The protein belongs to the transaldolase family. Type 2 subfamily.

It localises to the cytoplasm. The enzyme catalyses D-sedoheptulose 7-phosphate + D-glyceraldehyde 3-phosphate = D-erythrose 4-phosphate + beta-D-fructose 6-phosphate. Its pathway is carbohydrate degradation; pentose phosphate pathway; D-glyceraldehyde 3-phosphate and beta-D-fructose 6-phosphate from D-ribose 5-phosphate and D-xylulose 5-phosphate (non-oxidative stage): step 2/3. Functionally, transaldolase is important for the balance of metabolites in the pentose-phosphate pathway. This Kocuria rhizophila (strain ATCC 9341 / DSM 348 / NBRC 103217 / DC2201) protein is Transaldolase.